The chain runs to 656 residues: DNA ligase (656 aa).

Residues 32–36 (DEEYD), 81–82 (SM), and Glu112 contribute to the NAD(+) site. Residue Lys114 is the N6-AMP-lysine intermediate of the active site. Arg135, Glu169, Lys284, and Lys308 together coordinate NAD(+). The Zn(2+) site is built by Cys402, Cys405, Cys418, and Cys423. In terms of domain architecture, BRCT spans 577-656 (VQKTPFTGKT…DMWKMLKEGK (80 aa)).

It belongs to the NAD-dependent DNA ligase family. LigA subfamily. Mg(2+) serves as cofactor. Mn(2+) is required as a cofactor.

The catalysed reaction is NAD(+) + (deoxyribonucleotide)n-3'-hydroxyl + 5'-phospho-(deoxyribonucleotide)m = (deoxyribonucleotide)n+m + AMP + beta-nicotinamide D-nucleotide.. Its function is as follows. DNA ligase that catalyzes the formation of phosphodiester linkages between 5'-phosphoryl and 3'-hydroxyl groups in double-stranded DNA using NAD as a coenzyme and as the energy source for the reaction. It is essential for DNA replication and repair of damaged DNA. The polypeptide is DNA ligase (Nautilia profundicola (strain ATCC BAA-1463 / DSM 18972 / AmH)).